An 82-amino-acid chain; its full sequence is Small ribosomal subunit protein uS17 (82 aa).

This sequence belongs to the universal ribosomal protein uS17 family. As to quaternary structure, part of the 30S ribosomal subunit.

In terms of biological role, one of the primary rRNA binding proteins, it binds specifically to the 5'-end of 16S ribosomal RNA. In Shewanella pealeana (strain ATCC 700345 / ANG-SQ1), this protein is Small ribosomal subunit protein uS17.